The sequence spans 116 residues: Tyrosine-protein phosphatase 20 (116 aa).

Positions 1-116 (WMMIVEQKCR…EIGGDAPMVV (116 aa)) constitute a Tyrosine-protein phosphatase domain. Substrate is bound at residue Asp84.

This sequence belongs to the protein-tyrosine phosphatase family.

It catalyses the reaction O-phospho-L-tyrosyl-[protein] + H2O = L-tyrosyl-[protein] + phosphate. The sequence is that of Tyrosine-protein phosphatase 20 (STY-20) from Styela plicata (Wrinkled sea squirt).